Here is a 107-residue protein sequence, read N- to C-terminus: DNA-directed RNA polymerase subunit omega (107 aa).

The disordered stretch occupies residues 81-107; that stretch reads MEEEAAKGNADAGQGEGDAPKTPGQDG.

Belongs to the RNA polymerase subunit omega family. The RNAP catalytic core consists of 2 alpha, 1 beta, 1 beta' and 1 omega subunit. When a sigma factor is associated with the core the holoenzyme is formed, which can initiate transcription.

The catalysed reaction is RNA(n) + a ribonucleoside 5'-triphosphate = RNA(n+1) + diphosphate. Promotes RNA polymerase assembly. Latches the N- and C-terminal regions of the beta' subunit thereby facilitating its interaction with the beta and alpha subunits. The chain is DNA-directed RNA polymerase subunit omega from Alkalilimnicola ehrlichii (strain ATCC BAA-1101 / DSM 17681 / MLHE-1).